Reading from the N-terminus, the 247-residue chain is DNA polymerase sliding clamp (247 aa).

Belongs to the PCNA family. As to quaternary structure, homotrimer. The subunits circularize to form a toroid; DNA passes through its center. Replication factor C (RFC) is required to load the toroid on the DNA.

Sliding clamp subunit that acts as a moving platform for DNA processing. Responsible for tethering the catalytic subunit of DNA polymerase and other proteins to DNA during high-speed replication. This chain is DNA polymerase sliding clamp, found in Methanosphaerula palustris (strain ATCC BAA-1556 / DSM 19958 / E1-9c).